The following is a 79-amino-acid chain: Conotoxin 12 (79 aa).

Residues 1-22 form the signal peptide; sequence MKLTCVLIITVLFLTASQLITA. The propeptide occupies 23 to 47; the sequence is DYSRDQRQYRAVRLGDEMRNFKGAR. Intrachain disulfides connect Cys-49-Cys-62, Cys-56-Cys-67, and Cys-61-Cys-77.

It belongs to the conotoxin O1 superfamily. In terms of tissue distribution, expressed by the venom duct.

The protein resides in the secreted. This Conus vexillum (Flag cone) protein is Conotoxin 12.